A 215-amino-acid chain; its full sequence is Sodium channel regulatory subunit beta-2 (215 aa).

The signal sequence occupies residues 1 to 29 (MHRDAWLPRPAFSLTGLSLFFSLVPPGRS). Topologically, residues 30 to 157 (MEVTAPTTLS…LEVPPERDST (128 aa)) are extracellular. The region spanning 32 to 154 (VTAPTTLSVL…QVLLEVPPER (123 aa)) is the Ig-like C2-type domain. N-linked (GlcNAc...) asparagine glycosylation is found at Asn42, Asn66, and Asn74. 2 cysteine pairs are disulfide-bonded: Cys50/Cys127 and Cys72/Cys75. A helical transmembrane segment spans residues 158 to 179 (VAVIVGASVGGFLAVVILVLMV). At 180-215 (VKCVRRKKEQKLSTDDLKTEEEGKMDGEGNAEDGTK) the chain is on the cytoplasmic side. The segment at 188–215 (EQKLSTDDLKTEEEGKMDGEGNAEDGTK) is disordered. Residues 189-215 (QKLSTDDLKTEEEGKMDGEGNAEDGTK) show a composition bias toward basic and acidic residues. The residue at position 192 (Ser192) is a Phosphoserine.

This sequence belongs to the sodium channel auxiliary subunit SCN2B (TC 8.A.17) family. In terms of assembly, a voltage-gated sodium (Nav) channel consists of an ion-conducting pore-forming alpha subunit functional on its own that is regulated by one or more beta subunits. The beta subunit SCN2B is disulfide-linked to the pore-forming alpha subunit. Interacts with SCN1A; regulatory subunit of SCN1A/Nav1.1. Interacts with SCN2A; regulatory subunit of SCN2A/Nav1.2. Interacts with SCN3A; regulatory subunit of SCN3A/Nav1.3. Interacts with SCN5A; regulatory subunit of SCN5A/Nav1.5. Interacts with SCN8A; regulatory subunit of SCN8A/Nav1.6. Interacts with SCN9A; regulatory subunit of SCN9A/Nav1.7. Interacts with SCN10A; regulatory subunit of SCN10A/Nav1.8. Interacts with TNR; may play a crucial role in clustering and regulation of activity of SCN2B-containing Nav channels at nodes of Ranvier.

The protein resides in the cell membrane. The protein localises to the cell projection. It localises to the axon. Functionally, regulatory subunit of multiple voltage-gated sodium (Nav) channels directly mediating the depolarization of excitable membranes. Navs, also called VGSCs (voltage-gated sodium channels) or VDSCs (voltage-dependent sodium channels), operate by switching between closed and open conformations depending on the voltage difference across the membrane. In the open conformation they allow Na(+) ions to selectively pass through the pore, along their electrochemical gradient. The influx of Na+ ions provokes membrane depolarization, initiating the propagation of electrical signals throughout cells and tissues. The accessory beta subunits participate in localization and functional modulation of the Nav channels. Modulates the activity of SCN1A/Nav1.1, SCN2A/Nav1.2, SCN2A/Nav1.3, SCN5A/Nav1.5, SCN8A/Nav1.6, SCN9A/Nav1.7 and SCN10A/Nav1.8. The sequence is that of Sodium channel regulatory subunit beta-2 from Mus musculus (Mouse).